Reading from the N-terminus, the 400-residue chain is Sensor histidine kinase LnrJ (400 aa).

Residues Met1–Lys2 lie on the Extracellular side of the membrane. Residues Ala3–Val23 traverse the membrane as a helical segment. The Cytoplasmic portion of the chain corresponds to Lys24–Asn27. The helical transmembrane segment at Trp28 to Leu48 threads the bilayer. The Extracellular segment spans residues Thr49 to Asp61. A helical transmembrane segment spans residues Ile62 to Leu82. Residues Cys83 to Ser101 are Cytoplasmic-facing. Residues Val102–Gly122 form a helical membrane-spanning segment. At Asn123–Phe125 the chain is on the extracellular side. A helical membrane pass occupies residues Val126 to Ile146. Residues Arg147 to Ser400 lie on the Cytoplasmic side of the membrane. The region spanning Ile190–Asn385 is the Histidine kinase domain. His201 bears the Phosphohistidine; by autocatalysis mark.

Post-translationally, autophosphorylated.

It localises to the cell membrane. The enzyme catalyses ATP + protein L-histidine = ADP + protein N-phospho-L-histidine.. Required for resistance to linearmycins, a family of antibiotic-specialized metabolites produced by some streptomycetes. Member of the two-component regulatory system LnrJ/LnrK, which induces expression of the LnrLMN ABC transporter in response to linearmycins and other polyenes. Acts as a specific sensor for linearmycin, either directly through binding or indirectly through membrane perturbation. Probably activates LnrK by phosphorylation. May also promote biofilm formation. The chain is Sensor histidine kinase LnrJ from Bacillus subtilis (strain 168).